A 74-amino-acid chain; its full sequence is Protein krueppel (74 aa).

4 consecutive C2H2-type zinc fingers follow at residues 1–4 (ERTH), 10–32 (FECS…MRLH), 38–60 (YHCT…LRVH), and 66–74 (YACELCASR).

Belongs to the krueppel C2H2-type zinc-finger protein family.

The protein resides in the nucleus. Krueppel is a gap class segmentation protein. In Euscelis plebejus (Leafhopper), this protein is Protein krueppel (Kr).